Consider the following 501-residue polypeptide: Dipeptide and tripeptide permease A (501 aa).

The Cytoplasmic segment spans residues 1 to 21; sequence MSTANKKPTESVSLNAFKQPK. The chain crosses the membrane as a helical span at residues 22 to 44; the sequence is AFYLIFSIELWERFGYYGLQGIM. At 45-59 the chain is on the periplasmic side; sequence AVYLVKQLGMSEADS. The chain crosses the membrane as a helical span at residues 60 to 80; that stretch reads ITLFSSFSALVYGLVAIGGWL. Residues 81–89 lie on the Cytoplasmic side of the membrane; that stretch reads GDKILGTKR. A helical membrane pass occupies residues 90–110; it reads VIMLGAVVLAIGYALVAWSGH. Asp111 is a topological domain (periplasmic). Residues 112-132 traverse the membrane as a helical segment; the sequence is AGIVYMGMAAIAVGNGLFKAN. Topologically, residues 133–153 are cytoplasmic; that stretch reads PSSLLSTCYAKDDPRLDGAFT. A helical transmembrane segment spans residues 154-174; the sequence is MYYMSVNIGSFFSMLATPWLA. At 175–178 the chain is on the periplasmic side; that stretch reads ARYG. A helical transmembrane segment spans residues 179 to 199; sequence WSTAFALSVVGMLITVVNFAF. Residues 200-219 lie on the Cytoplasmic side of the membrane; the sequence is CQRWVKSYGSKPDFEPINFR. The helical transmembrane segment at 220 to 240 threads the bilayer; sequence NLLLTIVGIVVLIAVATWLLH. The Periplasmic segment spans residues 241–246; sequence NQDIAR. A helical transmembrane segment spans residues 247–267; it reads MVLGVIALGIVIIFGKEAFSM. Residues 268–274 are Cytoplasmic-facing; it reads HGAARRK. The chain crosses the membrane as a helical span at residues 275–295; the sequence is MIVAFILMLQAIIFFVLYSQM. Topologically, residues 296–320 are periplasmic; the sequence is PTSLNFFAIRNVEHSILGIAFEPEQ. The helical transmembrane segment at 321–341 threads the bilayer; it reads YQALNPFWIIIGSPILAAIYN. Over 342-352 the chain is Cytoplasmic; the sequence is RMGDTLPMPMK. Residues 353–373 traverse the membrane as a helical segment; sequence FAIGMVLCSGAFLILPLGAKF. At 374-383 the chain is on the periplasmic side; sequence ANDAGIVSVN. Residues 384 to 404 form a helical membrane-spanning segment; sequence WLIASYGLQSIGELMISGLGL. Residues 405–414 are Cytoplasmic-facing; sequence AMVAQLVPQR. A helical membrane pass occupies residues 415–435; it reads LMGFIMGSWFLTTAGANIIGG. Over 436 to 459 the chain is Periplasmic; that stretch reads YVANLMAVPSDVTDPLMSLEVYGR. Residues 460-480 traverse the membrane as a helical segment; that stretch reads VFMQIGIATAVIAVLMLLTAP. Residues 481-501 are Cytoplasmic-facing; it reads KLNRMTQDDDTAEKGSKAATV.

Belongs to the major facilitator superfamily. Proton-dependent oligopeptide transporter (POT/PTR) (TC 2.A.17) family. DtpA subfamily.

It localises to the cell inner membrane. In terms of biological role, proton-dependent permease that transports di- and tripeptides. This Salmonella typhimurium (strain LT2 / SGSC1412 / ATCC 700720) protein is Dipeptide and tripeptide permease A.